Consider the following 176-residue polypeptide: MSTKDPNRLPHEKGFHISWDQIHRDSRALAWRLDGLGPDDGHWRAVVAITRGGMAPAMIVARELDIRTVDTISVKSYHSGGGKADQRREAEVLKSPDADIMGDGTGILIVDDLVDSGKTLELVRTLYPKAHFATVYAKPQGEPQVDTFITGVSQDTWIFFPWDMALQYVEPYRGTD.

5-phospho-alpha-D-ribose 1-diphosphate contacts are provided by residues R51 to G52, R88, and D111 to T119. Residue R88 coordinates GMP. Position 112 (D112) interacts with Mg(2+). The guanine site is built by D115 and I158. Positions 115 and 158 each coordinate xanthine. GMP-binding positions include D115–T119 and W157–I158.

This sequence belongs to the purine/pyrimidine phosphoribosyltransferase family. XGPT subfamily. In terms of assembly, homotetramer. It depends on Mg(2+) as a cofactor.

It is found in the cell inner membrane. It carries out the reaction GMP + diphosphate = guanine + 5-phospho-alpha-D-ribose 1-diphosphate. It catalyses the reaction XMP + diphosphate = xanthine + 5-phospho-alpha-D-ribose 1-diphosphate. The catalysed reaction is IMP + diphosphate = hypoxanthine + 5-phospho-alpha-D-ribose 1-diphosphate. Its pathway is purine metabolism; GMP biosynthesis via salvage pathway; GMP from guanine: step 1/1. The protein operates within purine metabolism; XMP biosynthesis via salvage pathway; XMP from xanthine: step 1/1. In terms of biological role, purine salvage pathway enzyme that catalyzes the transfer of the ribosyl-5-phosphate group from 5-phospho-alpha-D-ribose 1-diphosphate (PRPP) to the N9 position of the 6-oxopurines guanine and xanthine to form the corresponding ribonucleotides GMP (guanosine 5'-monophosphate) and XMP (xanthosine 5'-monophosphate), with the release of PPi. To a lesser extent, also acts on hypoxanthine. In Ruegeria sp. (strain TM1040) (Silicibacter sp.), this protein is Xanthine-guanine phosphoribosyltransferase.